The primary structure comprises 56 residues: MLRWAVTFLIIALIAALFGFGGIAGASAGIAQILFFVFIALFAISLVARGLSGPSS.

The next 2 helical transmembrane spans lie at Trp4–Ala24 and Gly29–Ala48.

This sequence belongs to the UPF0391 family.

The protein localises to the cell membrane. The protein is UPF0391 membrane protein Jann_3570 of Jannaschia sp. (strain CCS1).